Consider the following 1069-residue polypeptide: Carbamoyl phosphate synthase large chain (1069 aa).

The interval 1–401 is carboxyphosphate synthetic domain; sequence MPLNKDIKRV…AFLKGIRSLE (401 aa). ATP-binding residues include R129, R169, G175, G176, K208, V210, E215, G241, I242, H243, Q284, and E298. Residues 133-327 form the ATP-grasp 1 domain; sequence RDMMNRIGEP…IAKLAAKIAL (195 aa). Residues Q284, E298, and N300 each contribute to the Mg(2+) site. The Mn(2+) site is built by Q284, E298, and N300. The tract at residues 402–549 is oligomerization domain; it reads IGKYSLDHKK…YSTYEQYDEV (148 aa). Residues 550-932 are carbamoyl phosphate synthetic domain; it reads EVSNRRKVIV…ALYKGFVGAN (383 aa). Residues 674 to 864 form the ATP-grasp 2 domain; that stretch reads DELLERLDIS…IVDIATQVML (191 aa). ATP is bound by residues R710, K749, L751, E755, G780, V781, H782, S783, Q823, and E835. Residues Q823, E835, and N837 each contribute to the Mg(2+) site. 3 residues coordinate Mn(2+): Q823, E835, and N837. The MGS-like domain maps to 932 to 1069; that stretch reads NMYPSKEKGK…KDLEVFDITK (138 aa). The allosteric domain stretch occupies residues 933–1069; sequence MYPSKEKGKI…KDLEVFDITK (137 aa).

It belongs to the CarB family. In terms of assembly, composed of two chains; the small (or glutamine) chain promotes the hydrolysis of glutamine to ammonia, which is used by the large (or ammonia) chain to synthesize carbamoyl phosphate. Tetramer of heterodimers (alpha,beta)4. Requires Mg(2+) as cofactor. The cofactor is Mn(2+).

The enzyme catalyses hydrogencarbonate + L-glutamine + 2 ATP + H2O = carbamoyl phosphate + L-glutamate + 2 ADP + phosphate + 2 H(+). It carries out the reaction hydrogencarbonate + NH4(+) + 2 ATP = carbamoyl phosphate + 2 ADP + phosphate + 2 H(+). Its pathway is amino-acid biosynthesis; L-arginine biosynthesis; carbamoyl phosphate from bicarbonate: step 1/1. It functions in the pathway pyrimidine metabolism; UMP biosynthesis via de novo pathway; (S)-dihydroorotate from bicarbonate: step 1/3. Its function is as follows. Large subunit of the glutamine-dependent carbamoyl phosphate synthetase (CPSase). CPSase catalyzes the formation of carbamoyl phosphate from the ammonia moiety of glutamine, carbonate, and phosphate donated by ATP, constituting the first step of 2 biosynthetic pathways, one leading to arginine and/or urea and the other to pyrimidine nucleotides. The large subunit (synthetase) binds the substrates ammonia (free or transferred from glutamine from the small subunit), hydrogencarbonate and ATP and carries out an ATP-coupled ligase reaction, activating hydrogencarbonate by forming carboxy phosphate which reacts with ammonia to form carbamoyl phosphate. The protein is Carbamoyl phosphate synthase large chain of Clostridium botulinum (strain Alaska E43 / Type E3).